Consider the following 296-residue polypeptide: Transposase for insertion sequence element IS629 (296 aa).

The Integrase catalytic domain maps to valine 125–tyrosine 285.

Involved in the transposition of the insertion sequence. This Shigella sonnei protein is Transposase for insertion sequence element IS629.